We begin with the raw amino-acid sequence, 140 residues long: ATP synthase epsilon chain (140 aa).

Belongs to the ATPase epsilon chain family. F-type ATPases have 2 components, CF(1) - the catalytic core - and CF(0) - the membrane proton channel. CF(1) has five subunits: alpha(3), beta(3), gamma(1), delta(1), epsilon(1). CF(0) has three main subunits: a, b and c.

It is found in the cell inner membrane. Functionally, produces ATP from ADP in the presence of a proton gradient across the membrane. The chain is ATP synthase epsilon chain from Neisseria meningitidis serogroup A / serotype 4A (strain DSM 15465 / Z2491).